A 400-amino-acid polypeptide reads, in one-letter code: Protection of telomeres homolog 1 (400 aa).

This sequence belongs to the telombin family. Expressed in sperm and oocytes.

The protein resides in the nucleus. Its subcellular location is the nucleus envelope. It is found in the chromosome. The protein localises to the telomere. Telomeric DNA-binding protein, which binds to single-stranded C-rich repeat sequences, with high specificity to the 5'-GCCTAA-3' sequence. Repeat sequence binding can be at the 5' or 3' telomeric end. May have a role in protecting the 5' end of the C-rich strand of the telomere. Acts redundantly with pot-2 to negatively regulate telomerase-mediated telomere extension. Also regulates telomere length by the telomerase-independent telomere maintenance pathway called ALT (alternative lengthening of telomeres). Through sun-1, anchors telomeres to the nuclear envelope in embryos. The sequence is that of Protection of telomeres homolog 1 from Caenorhabditis elegans.